A 416-amino-acid polypeptide reads, in one-letter code: Iron/alpha-ketoglutarate-dependent dioxygenase asqJ (416 aa).

The tract at residues 1–53 (MGYPKAFTSSDSEPEPDLSRDLGNPVMGNPGVVSRSSSTVAQHSVRNNPTGPD) is disordered. The segment covering 34-50 (SRSSSTVAQHSVRNNPT) has biased composition (polar residues). Positions 242, 244, and 319 each coordinate Fe cation.

The protein belongs to the PhyH family. Homodimer. Requires Fe cation as cofactor.

It carries out the reaction (-)-4'-methoxycyclopeptine + 2-oxoglutarate + O2 = (Z)-4'-methoxydehydrocyclopeptine + succinate + CO2 + H2O. It catalyses the reaction (Z)-4'-methoxydehydrocyclopeptine + 2-oxoglutarate + O2 = (-)-4'-methoxycyclopenine + succinate + CO2. The catalysed reaction is (-)-cyclopeptine + 2-oxoglutarate + O2 = (Z)-dehydrocyclopeptine + succinate + CO2 + H2O. The enzyme catalyses (Z)-dehydrocyclopeptine + 2-oxoglutarate + O2 = (-)-cyclopenine + succinate + CO2. Its pathway is secondary metabolite biosynthesis. It participates in alkaloid biosynthesis. It functions in the pathway mycotoxin biosynthesis. Its function is as follows. Iron/alpha-ketoglutarate-dependent dioxygenase; part of the gene cluster that mediates the biosynthesis of the aspoquinolone mycotoxins. Within the pathway, the iron/alpha-ketoglutarate-dependent dioxygenase asqJ acts as a (-)-cyclopenine synthase that converts 4'-methoxycyclopeptin into 4'-methoxydehydrocyclopeptin through dehydrogenation to form a double bond between C-alpha and C-beta of the O-methyltyrosine side chain. AsqJ is a very unique dioxygenase which is capable of catalyzing radical-mediated dehydrogenation and epoxidation reactions sequentially on a 6,7-benzo-diazepinedione substrate in the 4'-methoxyviridicatin biosynthetic pathway. AsqJ is also capable of converting cyclopeptin into dehydrocyclopeptin. The first step of the pathway is catalyzed by the nonribosomal peptide synthetase asqK that condenses anthranilic acid and O-methyl-L-tyrosine to produce 4'-methoxycyclopeptin. 4'-methoxycyclopeptin is then converted to 4'-methoxydehydrocyclopeptin by the ketoglutarate-dependent dioxygenase asqJ. AsqJ also converts its first product 4'-methoxydehydrocyclopeptin to 4'-methoxycyclopenin. The following conversion of 4'-methoxycyclopenin into 4'-methoxyviridicatin is catalyzed by the cyclopenase asqI. 4'-methoxyviridicatin is the precursor of quinolone natural products, and is further converted to quinolinone B. The prenyltransferase asqH1 then catalyzes the canonical Friedel-Crafts alkylation of quinolinone B with dimethylallyl cation to yield dimethylallyl quinolone, which is subjected to FAD-dependent dehydrogenation by the FAD-linked oxidoreductase asqF to yield conjugated aryl diene. The delta(3') double bond then serves as the site of the second alkylation with DMAPP catalyzed by the prenyltransferase asqH2 to yield a carbenium ion intermediate, which can be attacked by H(2)O to yield a styrenyl quinolone containing a C3'-hydroxyprenyl chain. The FAD-dependent monooxygenase asqG performs epoxidation of the terminal C7'-C8' olefin. Finally, after dehydratation of the epoxide at C3 by asqC, the quinolone epoxide rearrangement protein asqO catalyzes an enzymatic 3-exo-tet cyclization to yield the cyclopropyl-THF ring system in aspoquinolone. The sequence is that of Iron/alpha-ketoglutarate-dependent dioxygenase asqJ from Emericella nidulans (strain FGSC A4 / ATCC 38163 / CBS 112.46 / NRRL 194 / M139) (Aspergillus nidulans).